Consider the following 251-residue polypeptide: Aliphatic sulfonates import ATP-binding protein SsuB (251 aa).

In terms of domain architecture, ABC transporter spans 19 to 238 (GELRHVDKWY…PGEPGAHTER (220 aa)). 51 to 58 (GRSGSGKS) contacts ATP.

This sequence belongs to the ABC transporter superfamily. Aliphatic sulfonates importer (TC 3.A.1.17.2) family. The complex is composed of two ATP-binding proteins (SsuB), two transmembrane proteins (SsuC) and a solute-binding protein (SsuA).

It is found in the cell membrane. It carries out the reaction ATP + H2O + aliphatic sulfonate-[sulfonate-binding protein]Side 1 = ADP + phosphate + aliphatic sulfonateSide 2 + [sulfonate-binding protein]Side 1.. Functionally, part of the ABC transporter complex SsuABC involved in aliphatic sulfonates import. Responsible for energy coupling to the transport system. The sequence is that of Aliphatic sulfonates import ATP-binding protein SsuB from Mycobacterium avium (strain 104).